The sequence spans 770 residues: ARF GTPase-activating protein GIT1 (770 aa).

The Arf-GAP domain maps to 1 to 124 (MSRKGPRAEV…AFVHKLPCRD (124 aa)). The tract at residues 1–124 (MSRKGPRAEV…AFVHKLPCRD (124 aa)) is interaction with gamma-tubulin and localization to the centrosome. A C4-type zinc finger spans residues 11 to 34 (CADCSAPDPGWASISRGVLVCDEC). ANK repeat units lie at residues 132-161 (DLSK…QANF), 166-195 (KGTT…DPGS), and 199-228 (NGRT…ELTD). A Phosphotyrosine modification is found at tyrosine 224. Residues 245 to 374 (HYIIPQMADR…QGKSLSSPTD (130 aa)) are interaction with PCLO. The interaction with PTK2/FAK1 stretch occupies residues 253–424 (DRSRQKCMSQ…NRARSMDSSD (172 aa)). Residues 254-376 (RSRQKCMSQS…KSLSSPTDNL (123 aa)) form an interaction with ARHGEF7 region. The interval 363–425 (RQQGKSLSSP…RARSMDSSDL (63 aa)) is disordered. Residues 366-383 (GKSLSSPTDNLELSARNQ) show a composition bias toward polar residues. Phosphoserine is present on residues serine 368 and serine 371. Threonine 373 is subject to Phosphothreonine. The segment at 375–596 (NLELSARNQS…QEGSRHASKL (222 aa)) is interaction with NCK2 and GRIN3A. Residues 375–596 (NLELSARNQS…QEGSRHASKL (222 aa)) form a required for localization at synapses region. Phosphoserine occurs at positions 379 and 384. Tyrosine 392 carries the phosphotyrosine modification. Phosphoserine is present on residues serine 394 and serine 397. Residues 394–403 (SVASDEDTDQ) are compositionally biased toward acidic residues. Position 401 is a phosphothreonine (threonine 401). Phosphoserine occurs at positions 419, 422, and 426. Positions 420–475 (MDSSDLSDGAVTLQEYLELKKALATSEAKVQQLMKVNSSLSDELRKLQREIHKLQA) are interaction with MAPK1. The tract at residues 429–629 (AVTLQEYLEL…EGKRFLELSK (201 aa)) is interaction with IKBKG. The stretch at 449–483 (VQQLMKVNSSLSDELRKLQREIHKLQAENLQLRQP) forms a coiled coil. Phosphoserine occurs at positions 507 and 545. Position 546 is a phosphothreonine (threonine 546). Phosphotyrosine occurs at positions 554 and 563. Residues serine 570, serine 580, serine 601, and serine 605 each carry the phosphoserine modification. Low complexity predominate over residues 574-586 (VTFTPSSPLLSSS). Residues 574–615 (VTFTPSSPLLSSSQEGSRHASKLSRHGSGAESDYENTQSGEP) form a disordered region. Residue threonine 610 is modified to Phosphothreonine. Serine 639 is subject to Phosphoserine. The interaction with PXN and TGFB1I1 stretch occupies residues 646–770 (PGLPSTEDVI…VTITTREKKQ (125 aa)).

As to quaternary structure, forms homodimers and possibly oligomers. May form heterooligomers with GIT2. Interacts with G protein-coupled receptor kinases, including GRK2, GRK3, GRK5 and GRK6. Interacts with PPFIA1, PPFIA2 and PPFIA4. Interacts with GRIP1 and forms a ternary complex with PPFIA1 and GRIP1. Directly interacts with ARHGEF7/beta-PIX, forming in vitro a heptameric complex made of a GIT1 dimer and an ARHGEF7 trimer. Directly interacts with PXN/paxillin; this interaction is enhanced in the presence of ARHGEF7. Directly interacts (via C-terminus) with TGFB1I1/Hic-5 (via LD motif 3). Directly interacts with PTK2/FAK1. May interact with PTK2B/PYK2; this interaction may be indirect. Interacts with AMPA receptors GRIA2/3. Directly interacts with protein Piccolo/PCLO. Forms a complex with Ephrin-B1/EFNB1 and NCK2/GRB4 (via SH2); this interaction is important for spine morphogenesis and synapse formation. Interaction with NCK2 is transient and depends upon GIT1 phosphorylation at Tyr-392. Interacts with GRIN3A/GluN3A (via C-terminus); this interaction competes with GIT1 interaction with ARHGEF7 and limits synaptic localization of GIT1. Interacts with IKBKG/NEMO in resting bone mesenchymal stem cells, as well as in TNF-stimulated cells; this interaction may increase IKBKG affinity for 'Lys-63'-linked polyubiquitin chains. Interacts with GABA(A) receptors, including GABRB3 and GABRG2. Interacts with SCRIB. Interacts (via N- and C-terminus) with ENTR1/SDCCAG3 (via N-terminus); this interaction is direct. May form a tripartite complex with ENTR1 and PTPN13. Interacts with YWHAZ. Interacts with PAK1 and PAK3. Directly interacts (via N-terminus) with gamma-tubulin. Interacts with MAPK1 and MAPK3; this interaction is required for MAPK1/3 recruitment to focal adhesions. Post-translationally, phosphorylated on tyrosine residues by PTK2/FAK1 and SRC in growing fibroblasts. Phosphorylation at Tyr-392 is induced by activation of Ephrin-B1/EFNB1 and catalyzed by SRC family kinases. It is required for the interaction with NCK2 and for GIT1 recruitment to synapses in hippocampal neurons. As to expression, widely expressed. Expressed at high levels in testis (at protein level). Expressed in the brain, including in CA1 hippocampal neurons, in the amygdala, and thalamic nuclei (at protein level).

It localises to the cytoplasm. It is found in the synapse. Its subcellular location is the presynapse. The protein resides in the postsynapse. The protein localises to the postsynaptic density. It localises to the cell junction. It is found in the focal adhesion. Its subcellular location is the cell projection. The protein resides in the lamellipodium. The protein localises to the cytoskeleton. It localises to the microtubule organizing center. It is found in the centrosome. Its subcellular location is the spindle pole. GTPase-activating protein for ADP ribosylation factor family members, including ARF1. Multidomain scaffold protein that interacts with numerous proteins and therefore participates in many cellular functions, including receptor internalization, focal adhesion remodeling, and signaling by both G protein-coupled receptors and tyrosine kinase receptors. Through PAK1 activation, positively regulates microtubule nucleation during interphase. Plays a role in the regulation of cytokinesis; for this function, may act in a pathway also involving ENTR1 and PTPN13. May promote cell motility both by regulating focal complex dynamics and by the activation of RAC1. May act as scaffold for MAPK1/3 signal transduction, recruiting MAPK1/3 to focal adhesions after EGF stimulation via a Src-dependent pathway, hence stimulating cell migration. Plays a role in brain development and function. Involved in the regulation of spine density and synaptic plasticity that is required for processes involved in learning. Plays an important role in dendritic spine morphogenesis and synapse formation. In hippocampal neurons, recruits guanine nucleotide exchange factors (GEFs), such as ARHGEF7/beta-PIX, to the synaptic membrane. These in turn locally activate RAC1, which is an essential step for spine morphogenesis and synapse formation. May contribute to the organization of presynaptic active zones through oligomerization and formation of a Piccolo/PCLO-based protein network, which includes ARHGEF7/beta-PIX and FAK1. In neurons, through its interaction with liprin-alpha family members, may be required for AMPA receptor (GRIA2/3) proper targeting to the cell membrane. In complex with GABA(A) receptors and ARHGEF7, plays a crucial role in regulating GABA(A) receptor synaptic stability, maintaining GPHN/gephyrin scaffolds and hence GABAergic inhibitory synaptic transmission, by locally coordinating RAC1 and PAK1 downstream effector activity, leading to F-actin stabilization. May also be important for RAC1 downstream signaling pathway through PAK3 and regulation of neuronal inhibitory transmission at presynaptic input. Required for successful bone regeneration during fracture healing. The function in intramembranous ossification may, at least partly, exerted by macrophages in which GIT1 is a key negative regulator of redox homeostasis, IL1B production, and glycolysis, acting through the ERK1/2/NRF2/NFE2L2 axis. May also play a role in angiogenesis during fracture healing. In this process, may regulate activation of the canonical NF-kappa-B signal in bone mesenchymal stem cells by enhancing the interaction between NEMO and 'Lys-63'-ubiquitinated RIPK1/RIP1, eventually leading to enhanced production of VEGFA and others angiogenic factors. Essential for VEGF signaling through the activation of phospholipase C-gamma and ERK1/2, hence may control endothelial cell proliferation and angiogenesis. This chain is ARF GTPase-activating protein GIT1, found in Rattus norvegicus (Rat).